A 178-amino-acid chain; its full sequence is ATP synthase subunit delta (178 aa).

It belongs to the ATPase delta chain family. As to quaternary structure, F-type ATPases have 2 components, F(1) - the catalytic core - and F(0) - the membrane proton channel. F(1) has five subunits: alpha(3), beta(3), gamma(1), delta(1), epsilon(1). F(0) has three main subunits: a(1), b(2) and c(10-14). The alpha and beta chains form an alternating ring which encloses part of the gamma chain. F(1) is attached to F(0) by a central stalk formed by the gamma and epsilon chains, while a peripheral stalk is formed by the delta and b chains.

It localises to the cell inner membrane. Functionally, f(1)F(0) ATP synthase produces ATP from ADP in the presence of a proton or sodium gradient. F-type ATPases consist of two structural domains, F(1) containing the extramembraneous catalytic core and F(0) containing the membrane proton channel, linked together by a central stalk and a peripheral stalk. During catalysis, ATP synthesis in the catalytic domain of F(1) is coupled via a rotary mechanism of the central stalk subunits to proton translocation. This protein is part of the stalk that links CF(0) to CF(1). It either transmits conformational changes from CF(0) to CF(1) or is implicated in proton conduction. The sequence is that of ATP synthase subunit delta from Pseudomonas fluorescens (strain ATCC BAA-477 / NRRL B-23932 / Pf-5).